The following is a 555-amino-acid chain: Beta-hexosaminidase A (555 aa).

The signal sequence occupies residues Met1 to Thr18. The N-linked (GlcNAc...) asparagine glycan is linked to Asn47. Glu325 (proton donor) is an active-site residue. 3 N-linked (GlcNAc...) asparagine glycosylation sites follow: Asn351, Asn412, and Asn460.

Belongs to the glycosyl hydrolase 20 family. Expressed in coelomocytes and neurons of the pharyngeal region and nerve cord.

It localises to the lysosome. The catalysed reaction is Hydrolysis of terminal non-reducing N-acetyl-D-hexosamine residues in N-acetyl-beta-D-hexosaminides.. In terms of biological role, responsible for the degradation of GM2 gangliosides, and a variety of other molecules containing terminal N-acetyl hexosamines. Degrades chitotriose. This chain is Beta-hexosaminidase A (hex-1), found in Caenorhabditis elegans.